Reading from the N-terminus, the 478-residue chain is MDLLVMLLSLLVSYLIFKIWKRIDSKRDQNCYILDYQCHKPSDDRMVNTQFSGDIILRNKHLRLNEYKFLLKAIVSSGIGEQTYAPRLFFEGREQRPTLQDGLSEMEEFYIDTIEKVLKRNKISPSEIDILVVNVSMLNSTPSLSARIINHYKMREDIKVFNLTAMGCSASVISIDIVKNIFKTYKNKLALVVTSESLSPNWYSGNNRSMILANCLFRSGGCAVLLTNKRSLSRRAMFKLRCLVRTHHGARDDSFNACVQKEDELGHIGVHLDKTLPKAATRAFIDNLKVITPKILPVTELLRFMLCLLLKKLRSSPSKGSTNVTQAAPKAGVKAGINFKTGIDHFCIHTGGKAVIDAIGYSLDLNEYDLEPARMTLHRFGNTSASSLWYVLGYMEAKKRLKRGDRVFMISFGAGFKCNSCVWEVVRDLNVGEAVGNVWNHCINQYPPKSILNPFFEKYGWIHEEEDPDTFKMPEGFM.

The signal sequence occupies residues 1 to 25; sequence MDLLVMLLSLLVSYLIFKIWKRIDS. Residues 26 to 313 form the FAE domain; it reads KRDQNCYILD…FMLCLLLKKL (288 aa). Active-site residues include cysteine 168, histidine 247, histidine 345, histidine 349, histidine 378, and asparagine 382.

The protein belongs to the thiolase-like superfamily. Chalcone/stilbene synthases family. In terms of tissue distribution, expressed in siliques, leaves, stems and seedlings.

It localises to the endoplasmic reticulum. The enzyme catalyses a very-long-chain acyl-CoA + malonyl-CoA + H(+) = a very-long-chain 3-oxoacyl-CoA + CO2 + CoA. The protein operates within lipid metabolism; fatty acid biosynthesis. The chain is 3-ketoacyl-CoA synthase 3 from Arabidopsis thaliana (Mouse-ear cress).